The chain runs to 953 residues: Valine--tRNA ligase (953 aa).

The 'HIGH' region motif lies at 42-52; that stretch reads PNVTGSLHMGH. The 'KMSKS' region motif lies at 554-558; it reads KMSKS. Lysine 557 is a binding site for ATP. The stretch at 884-953 forms a coiled coil; it reads LIDKDAELAR…EAQKETIAAL (70 aa).

The protein belongs to the class-I aminoacyl-tRNA synthetase family. ValS type 1 subfamily. Monomer.

It is found in the cytoplasm. It catalyses the reaction tRNA(Val) + L-valine + ATP = L-valyl-tRNA(Val) + AMP + diphosphate. In terms of biological role, catalyzes the attachment of valine to tRNA(Val). As ValRS can inadvertently accommodate and process structurally similar amino acids such as threonine, to avoid such errors, it has a 'posttransfer' editing activity that hydrolyzes mischarged Thr-tRNA(Val) in a tRNA-dependent manner. This chain is Valine--tRNA ligase, found in Photobacterium profundum (strain SS9).